A 338-amino-acid polypeptide reads, in one-letter code: Lipoate-protein ligase A (338 aa).

Residues 29–216 enclose the BPL/LPL catalytic domain; sequence PATQRVLFLW…AFFAYYGERV (188 aa). ATP contacts are provided by residues arginine 71, 76–79, and lysine 134; that span reads GAVF. Lysine 134 provides a ligand contact to (R)-lipoate.

It belongs to the LplA family. As to quaternary structure, monomer.

It is found in the cytoplasm. It catalyses the reaction L-lysyl-[lipoyl-carrier protein] + (R)-lipoate + ATP = N(6)-[(R)-lipoyl]-L-lysyl-[lipoyl-carrier protein] + AMP + diphosphate + H(+). It functions in the pathway protein modification; protein lipoylation via exogenous pathway; protein N(6)-(lipoyl)lysine from lipoate: step 1/2. The protein operates within protein modification; protein lipoylation via exogenous pathway; protein N(6)-(lipoyl)lysine from lipoate: step 2/2. Functionally, catalyzes both the ATP-dependent activation of exogenously supplied lipoate to lipoyl-AMP and the transfer of the activated lipoyl onto the lipoyl domains of lipoate-dependent enzymes. In Cronobacter sakazakii (strain ATCC BAA-894) (Enterobacter sakazakii), this protein is Lipoate-protein ligase A.